The primary structure comprises 456 residues: RUN domain-containing protein 3B (456 aa).

The interval 1–26 (MASRSLGGLSGIRGGGGGGGKKSLSS) is disordered. Residues 8–21 (GLSGIRGGGGGGGK) are compositionally biased toward gly residues. R13 is modified (omega-N-methylarginine). One can recognise an RUN domain in the interval 57-189 (DDSSPEFNNF…IDFSFCLKGE (133 aa)). 2 positions are modified to phosphoserine: S215 and S216. Positions 300–325 (AHKLEKEQLEYIIVELQDQLTVLKNN) form a coiled coil. Positions 382 to 405 (SLSQTSLDPGQSQEGDGKQDTLNI) are disordered.

Belongs to the RUNDC3 family. Interacts with RAP2A.

The protein is RUN domain-containing protein 3B (RUNDC3B) of Macaca fascicularis (Crab-eating macaque).